Here is a 446-residue protein sequence, read N- to C-terminus: Chromogranin-A (446 aa).

The N-terminal stretch at 1–16 (SAAALALLLCAGQVIA) is a signal peptide. Cys33 and Cys54 are oxidised to a cystine. The interval 85–426 (AKERSHQQKK…RPEDQELESL (342 aa)) is disordered. Ser97 carries the post-translational modification Phosphoserine. The segment covering 105–138 (VLEKQNDQAELKEGTEEASSKEAAEKRGDSKEVE) has biased composition (basic and acidic residues). The span at 160 to 171 (EAEDQTPGEEEA) shows a compositional bias: acidic residues. Residue Ser209 is modified to Phosphoserine. Residues 226-243 (AGEKAVPEEEGPRSEAFD) show a composition bias toward basic and acidic residues. Ser286 is modified (phosphoserine). Residue Gly304 is modified to Glycine amide. The residue at position 319 (Ser319) is a Phosphoserine. The span at 319 to 346 (SEEWENAKRWSKMDRLAKELTAEKRLQG) shows a compositional bias: basic and acidic residues. Acidic residues predominate over residues 347–357 (EEEEEEEEEDP). Ser360 carries the phosphoserine modification. Met361 is modified (methionine sulfoxide). 4 positions are modified to phosphoserine: Ser387, Ser391, Ser413, and Ser427. A compositionally biased stretch (basic and acidic residues) spans 403–420 (YLEEKKEEEGSANRRPED). The O-linked (Xyl...) (chondroitin sulfate) serine glycan is linked to Ser413.

It belongs to the chromogranin/secretogranin protein family. In terms of assembly, self-interacts; self-assembly is promoted in vitro by chondroitin sulfate attachment which occurs at mildly acidic pH conditions. Interacts with SCG3. Interacts with ITPR1 in the secretory granules. O-glycosylated; contains chondroitin sulfate (CS). CS attachment is pH-dependent, being observed at mildly acidic conditions of pH 5 but not at neutral pH, and promotes self-assembly in vitro. Post-translationally, parathyroid CHGA is sulfated on tyrosine residues, whereas adrenal CHGA seems to be mainly sulfated on oligosaccharide residues.

It is found in the secreted. The protein resides in the cytoplasmic vesicle. The protein localises to the secretory vesicle. It localises to the neuronal dense core vesicle. In terms of biological role, strongly inhibits glucose induced insulin release from the pancreas. Inhibits low calcium-stimulated parathyroid cell secretion. Its function is as follows. Inhibits catecholamine release from chromaffin cells and noradrenergic neurons by acting as a non-competitive nicotinic cholinergic antagonist. Can induce mast cell migration, degranulation and production of cytokines and chemokines. Functionally, regulates granule biogenesis in endocrine cells by up-regulating the transcription of protease nexin 1 (SERPINE2) via a cAMP-PKA-SP1 pathway. This leads to inhibition of granule protein degradation in the Golgi complex which in turn promotes granule formation. In Sus scrofa (Pig), this protein is Chromogranin-A (CHGA).